We begin with the raw amino-acid sequence, 82 residues long: Small ribosomal subunit protein bS16 (82 aa).

The protein belongs to the bacterial ribosomal protein bS16 family.

The protein is Small ribosomal subunit protein bS16 of Gloeothece citriformis (strain PCC 7424) (Cyanothece sp. (strain PCC 7424)).